A 387-amino-acid polypeptide reads, in one-letter code: Phosphoglycerate kinase (387 aa).

Substrate contacts are provided by residues 21-23 (DLN), Arg-36, 59-62 (HLGR), Arg-113, and Arg-146. Residues Lys-197, Glu-314, and 340–343 (GGDT) each bind ATP.

This sequence belongs to the phosphoglycerate kinase family. As to quaternary structure, monomer.

Its subcellular location is the cytoplasm. It carries out the reaction (2R)-3-phosphoglycerate + ATP = (2R)-3-phospho-glyceroyl phosphate + ADP. It functions in the pathway carbohydrate degradation; glycolysis; pyruvate from D-glyceraldehyde 3-phosphate: step 2/5. This is Phosphoglycerate kinase from Pseudomonas putida (strain ATCC 47054 / DSM 6125 / CFBP 8728 / NCIMB 11950 / KT2440).